Reading from the N-terminus, the 265-residue chain is 3-methyl-2-oxobutanoate hydroxymethyltransferase (265 aa).

The Mg(2+) site is built by D45 and D84. 3-methyl-2-oxobutanoate-binding positions include 45–46 (DS), D84, and K112. Mg(2+) is bound at residue E114. The active-site Proton acceptor is E181.

It belongs to the PanB family. Homodecamer; pentamer of dimers. Mg(2+) is required as a cofactor.

It is found in the cytoplasm. The enzyme catalyses 3-methyl-2-oxobutanoate + (6R)-5,10-methylene-5,6,7,8-tetrahydrofolate + H2O = 2-dehydropantoate + (6S)-5,6,7,8-tetrahydrofolate. The protein operates within cofactor biosynthesis; (R)-pantothenate biosynthesis; (R)-pantoate from 3-methyl-2-oxobutanoate: step 1/2. Functionally, catalyzes the reversible reaction in which hydroxymethyl group from 5,10-methylenetetrahydrofolate is transferred onto alpha-ketoisovalerate to form ketopantoate. This is 3-methyl-2-oxobutanoate hydroxymethyltransferase from Yersinia pseudotuberculosis serotype IB (strain PB1/+).